The primary structure comprises 275 residues: MPSPIALLTAATERIERVDAEALLLHALDCDRAWLFTHGDIPLAAAATESFQALVEQRARGIPVAYLIGRRGFWTLDVMVSSATLIPRAETETLVEQALQRLDHASERRVADLGTGSGAIALAIACERPQAQVLATDNSAAALDIAARNASAHGLNHVVFREGDWYEALLGERFDLIVSNPPYIAVTDPHLTQGDLRFEPPSALISGGDGLDALRILTAGAPAYLRPGGWLVMEHGWDQGAAMRTLLHTAGLVAVATVQDLEARDRVTVGRCPGF.

S-adenosyl-L-methionine is bound by residues 114-118 (GTGSG), Asp-137, Trp-165, and Asn-180. 180 to 183 (NPPY) is a binding site for substrate.

Belongs to the protein N5-glutamine methyltransferase family. PrmC subfamily.

It carries out the reaction L-glutaminyl-[peptide chain release factor] + S-adenosyl-L-methionine = N(5)-methyl-L-glutaminyl-[peptide chain release factor] + S-adenosyl-L-homocysteine + H(+). Its function is as follows. Methylates the class 1 translation termination release factors RF1/PrfA and RF2/PrfB on the glutamine residue of the universally conserved GGQ motif. This is Release factor glutamine methyltransferase from Xylella fastidiosa (strain 9a5c).